The following is a 286-amino-acid chain: Citrullinase (286 aa).

In terms of domain architecture, CN hydrolase spans 4-258 (IKVAVVQLSF…DDILYATFDF (255 aa)). Residue Glu43 is the Proton acceptor of the active site. Lys116 is a catalytic residue. The active-site Nucleophile is the Cys153.

It belongs to the carbon-nitrogen hydrolase superfamily.

The catalysed reaction is L-citrulline + H2O + 2 H(+) = L-ornithine + NH4(+) + CO2. Its function is as follows. Catalyzes the degradation of citrulline into ornithine, carbon dioxide and ammonia. Contributes to intramacrophage survival, in vivo growth and pathogenesis. This Francisella tularensis subsp. tularensis (strain SCHU S4 / Schu 4) protein is Citrullinase.